We begin with the raw amino-acid sequence, 732 residues long: Photosystem I P700 chlorophyll a apoprotein A2 (732 aa).

8 helical membrane-spanning segments follow: residues Ile-46–Ala-69, Leu-133–Gln-156, Leu-173–Ile-197, Met-271–Tyr-289, Leu-328–Tyr-351, Ser-367–Ile-393, Ala-415–His-437, and Phe-515–Val-533. [4Fe-4S] cluster-binding residues include Cys-557 and Cys-566. A run of 2 helical transmembrane segments spans residues Ala-573–Trp-594 and Leu-641–Ile-663. Positions 652, 660, and 668 each coordinate chlorophyll a. Trp-669 contacts phylloquinone. Residues Leu-705–Ala-725 form a helical membrane-spanning segment.

It belongs to the PsaA/PsaB family. In terms of assembly, the PsaA/B heterodimer binds the P700 chlorophyll special pair and subsequent electron acceptors. PSI consists of a core antenna complex that captures photons, and an electron transfer chain that converts photonic excitation into a charge separation. The eukaryotic PSI reaction center is composed of at least 11 subunits. Requires P700 is a chlorophyll a/chlorophyll a' dimer, A0 is one or more chlorophyll a, A1 is one or both phylloquinones and FX is a shared 4Fe-4S iron-sulfur center. as cofactor.

The protein resides in the plastid. Its subcellular location is the chloroplast thylakoid membrane. The catalysed reaction is reduced [plastocyanin] + hnu + oxidized [2Fe-2S]-[ferredoxin] = oxidized [plastocyanin] + reduced [2Fe-2S]-[ferredoxin]. Functionally, psaA and PsaB bind P700, the primary electron donor of photosystem I (PSI), as well as the electron acceptors A0, A1 and FX. PSI is a plastocyanin/cytochrome c6-ferredoxin oxidoreductase, converting photonic excitation into a charge separation, which transfers an electron from the donor P700 chlorophyll pair to the spectroscopically characterized acceptors A0, A1, FX, FA and FB in turn. Oxidized P700 is reduced on the lumenal side of the thylakoid membrane by plastocyanin or cytochrome c6. The chain is Photosystem I P700 chlorophyll a apoprotein A2 from Cyanidioschyzon merolae (strain NIES-3377 / 10D) (Unicellular red alga).